A 192-amino-acid chain; its full sequence is Ubiquitin-conjugating enzyme E2 1 (192 aa).

Residues methionine 1 to proline 28 are disordered. One can recognise a UBC core domain in the interval proline 4–leucine 150. Cysteine 88 serves as the catalytic Glycyl thioester intermediate. The tract at residues alanine 171–alanine 192 is disordered.

Belongs to the ubiquitin-conjugating enzyme family. As to quaternary structure, interacts with ubr-1 and rfp-1. Interacts with ubc-13.

It carries out the reaction S-ubiquitinyl-[E1 ubiquitin-activating enzyme]-L-cysteine + [E2 ubiquitin-conjugating enzyme]-L-cysteine = [E1 ubiquitin-activating enzyme]-L-cysteine + S-ubiquitinyl-[E2 ubiquitin-conjugating enzyme]-L-cysteine.. It participates in protein modification; protein ubiquitination. Catalyzes the covalent attachment of ubiquitin to other proteins. The polypeptide is Ubiquitin-conjugating enzyme E2 1 (ubc-1) (Caenorhabditis elegans).